Consider the following 262-residue polypeptide: Plant intracellular Ras-group-related LRR protein 7 (262 aa).

LRR repeat units lie at residues 19–42 (WRST…VLQV), 43–66 (GNSL…VGTL), 68–89 (NMQR…IGYL), 90–112 (RNLK…LGSL), 113–135 (SNLQ…VGDL), 137–158 (NMLL…IGGC), 159–181 (SSLE…ICNL), 182–204 (VCLK…LLKD), and 206–231 (KALQ…GFTE).

This sequence belongs to the SHOC2 family. As to expression, widely expressed and preferentially in leaf sheathes.

Leucine-rich repeat protein that likely mediates protein interactions, possibly in the context of signal transduction. The protein is Plant intracellular Ras-group-related LRR protein 7 (IRL7) of Oryza sativa subsp. japonica (Rice).